Reading from the N-terminus, the 130-residue chain is Small ribosomal subunit protein uS8 (130 aa).

This sequence belongs to the universal ribosomal protein uS8 family. Part of the 30S ribosomal subunit.

Functionally, one of the primary rRNA binding proteins, it binds directly to 16S rRNA central domain where it helps coordinate assembly of the platform of the 30S subunit. This Pyrobaculum arsenaticum (strain DSM 13514 / JCM 11321 / PZ6) protein is Small ribosomal subunit protein uS8.